The chain runs to 695 residues: Elongation factor G 1 (695 aa).

In terms of domain architecture, tr-type G spans 5–280 (ARYRNIGIFA…AVVDYLPSPT (276 aa)). GTP is bound by residues 14–21 (AHVDAGKT), 78–82 (DTPGH), and 132–135 (NKLD).

The protein belongs to the TRAFAC class translation factor GTPase superfamily. Classic translation factor GTPase family. EF-G/EF-2 subfamily.

It is found in the cytoplasm. In terms of biological role, catalyzes the GTP-dependent ribosomal translocation step during translation elongation. During this step, the ribosome changes from the pre-translocational (PRE) to the post-translocational (POST) state as the newly formed A-site-bound peptidyl-tRNA and P-site-bound deacylated tRNA move to the P and E sites, respectively. Catalyzes the coordinated movement of the two tRNA molecules, the mRNA and conformational changes in the ribosome. In Pseudoalteromonas atlantica (strain T6c / ATCC BAA-1087), this protein is Elongation factor G 1.